Reading from the N-terminus, the 783-residue chain is Transcription factor E4F1 (783 aa).

The interval 40-84 (GFLGLPAPFSEEDEDDVHRCGRCQVEFTALEDFVQHKIQKTCHRA) is required for ubiquitin ligase activity. Ser49 is subject to Phosphoserine. Residues 185–264 (LLVNKEGRYV…GKSFRESGAL (80 aa)) are mediates dimerization, DNA-binding, transcription repression of CCNA2 and interaction with HMGA2. 2 consecutive C2H2-type zinc fingers follow at residues 193 to 215 (YVCM…MVTH) and 221 to 243 (HECK…HRRH). A C2H2-type 3; degenerate zinc finger spans residues 249–273 (YKCAKCGKSFRESGALTRHLKSLTP). The segment at 368–565 (NLLHQAMQNS…REKGSLVRHV (198 aa)) is mediates interaction with CDKN2A. Positions 386–407 (GEESALEPAPPSGSSPQCLGDG) are disordered. 5 consecutive C2H2-type zinc fingers follow at residues 434 to 456 (HPCP…KRGH), 462 to 484 (FTCT…QEVH), 490 to 512 (FRCG…RRVH), 518 to 540 (FPCP…FRTH), and 546 to 568 (HVCQ…VRHH). Residues 434–598 (HPCPQCSETF…LNRHLRTKGG (165 aa)) are interaction with BMI1. Residues 520–579 (CPQCGKRYKTKNAQQVHFRTHLEEKPHVCQFCSRGFREKGSLVRHVRHHTGEKPFKCYKC) form a mediates interaction with TP53 region. The C2H2-type 9; degenerate zinc-finger motif lies at 574–596 (FKCYKCGRGFAEHGTLNRHLRTK). The mediates interaction with RASSF1 stretch occupies residues 574 to 596 (FKCYKCGRGFAEHGTLNRHLRTK).

Homodimer; binds DNA as a dimer. Forms a complex with CDKN2A and TP53. Interacts with HDAC1, HMGA2 and RASSF1. Interactions with TP53, RB1, ANP32A and probably BMI1 and FHL2 regulate E4F1 activity. In terms of processing, phosphorylated; phosphorylation is cell cycle-dependent and regulates DNA-binding activity and function. Post-translationally, may be sumoylated by UBE2I upon interaction with CDKN2A. Ubiquitously expressed.

It is found in the nucleus. The protein resides in the nucleoplasm. The protein localises to the cytoplasm. It carries out the reaction S-ubiquitinyl-[E2 ubiquitin-conjugating enzyme]-L-cysteine + [acceptor protein]-L-lysine = [E2 ubiquitin-conjugating enzyme]-L-cysteine + N(6)-ubiquitinyl-[acceptor protein]-L-lysine.. Its pathway is protein modification; protein ubiquitination. Its function is as follows. May function as a transcriptional repressor. May also function as a ubiquitin ligase mediating ubiquitination of chromatin-associated TP53. Functions in cell survival and proliferation through control of the cell cycle. Functions in the p53 and pRB tumor suppressor pathways and regulates the cyclin CCNA2 transcription. This chain is Transcription factor E4F1 (E4f1), found in Mus musculus (Mouse).